A 300-amino-acid chain; its full sequence is F-box associated domain-containing protein sdz-33 (300 aa).

Residues 5–51 (PFPILCLPDFVLQKSLKLMGVVEHLCLSILSKNIKQLIATLKGYPKC) enclose the F-box domain.

As to expression, expressed in D-type motor neuron cell bodies.

Functionally, substrate recognition component of E3 ubiquitin-protein ligase complex which mediates the ubiquitination and subsequent proteasomal degradation of target proteins such as mdl-1. Positively regulates axon regeneration by targeting mdl-1 for ubiquitin-mediated degradation; probably thereby reducing levels of mdl-1-mxl-1 heterodimers, allowing free mxl-1 to form complexes with tdpt-1 and thus inhibiting tdpt-1-dependent sumoylation of ets-4. This Caenorhabditis elegans protein is F-box associated domain-containing protein sdz-33.